The primary structure comprises 300 residues: 4-hydroxy-tetrahydrodipicolinate synthase (300 aa).

Threonine 55 is a pyruvate binding site. Tyrosine 143 serves as the catalytic Proton donor/acceptor. The active-site Schiff-base intermediate with substrate is the lysine 171. Residue isoleucine 211 participates in pyruvate binding.

Belongs to the DapA family. As to quaternary structure, homotetramer; dimer of dimers.

It is found in the cytoplasm. It catalyses the reaction L-aspartate 4-semialdehyde + pyruvate = (2S,4S)-4-hydroxy-2,3,4,5-tetrahydrodipicolinate + H2O + H(+). It functions in the pathway amino-acid biosynthesis; L-lysine biosynthesis via DAP pathway; (S)-tetrahydrodipicolinate from L-aspartate: step 3/4. Its function is as follows. Catalyzes the condensation of (S)-aspartate-beta-semialdehyde [(S)-ASA] and pyruvate to 4-hydroxy-tetrahydrodipicolinate (HTPA). This is 4-hydroxy-tetrahydrodipicolinate synthase from Mycobacterium bovis (strain ATCC BAA-935 / AF2122/97).